The primary structure comprises 223 residues: Shematrin-like protein 2 (223 aa).

Residues M1–C19 form the signal peptide.

In terms of tissue distribution, prismatic layer of shell (at protein level).

The protein localises to the secreted. The chain is Shematrin-like protein 2 from Margaritifera margaritifera (Freshwater pearl mussel).